The following is a 198-amino-acid chain: Transcription factor LBX2 (198 aa).

3 disordered regions span residues 24-46 (MVPR…SPLC), 63-89 (ALQP…RKSR), and 173-198 (DPGL…QVDD). The homeobox DNA-binding region spans 85–144 (RRKSRTAFTAQQVLELERRFVFQKYLAPSERDGLATRLGLANAQVVTWFQNRRAKLKRDV).

The protein resides in the nucleus. In terms of biological role, transcription factor. The chain is Transcription factor LBX2 (LBX2) from Homo sapiens (Human).